The primary structure comprises 244 residues: MNYEKIDSTIPGPGISETDWNDVFEGCNCEAECSSAAGCSCLINKIDNYTVDGKINKSSELLIECSDQCACILLPTSCRNRVVQCGPQKKLEIFSTCEMAKGFGVRAGEQIAAGEFVCEYAGECIGEQEVERRCREFRGDDNYTLTLKEFFGGKPVKTFVDPRLRGNIGRFLNHSCEPNCEIILARLGRMIPAAGIFAKRDIVRGEELCYDYGHSAIEGENRKLCLCKSEKCRKYLPMSATPIE.

Residues glutamate 25–glycine 86 form the Pre-SET domain. Zn(2+)-binding residues include cysteine 27, cysteine 29, cysteine 33, cysteine 39, cysteine 41, cysteine 65, cysteine 69, cysteine 71, and cysteine 78. Positions lysine 89–glycine 213 constitute an SET domain. Residues lysine 101–phenylalanine 103, aspartate 141, tyrosine 143, arginine 170, and asparagine 173–histidine 174 contribute to the S-adenosyl-L-methionine site. The Zn(2+) site is built by cysteine 176, cysteine 225, cysteine 227, and cysteine 232. The Post-SET domain maps to asparagine 221 to proline 237.

It belongs to the class V-like SAM-binding methyltransferase superfamily. Histone-lysine methyltransferase family. Suvar3-9 subfamily.

It is found in the nucleus. The protein localises to the chromosome. The enzyme catalyses L-lysyl-[histone] + S-adenosyl-L-methionine = N(6)-methyl-L-lysyl-[histone] + S-adenosyl-L-homocysteine + H(+). Its function is as follows. Probable histone methyltransferase. Required for embryonic development. The chain is Probable histone-lysine N-methyltransferase set-23 (set-23) from Caenorhabditis elegans.